The primary structure comprises 275 residues: 3',5'-cyclic adenosine monophosphate phosphodiesterase CpdA (275 aa).

Residues Asp-22, His-24, Asp-64, Asn-94, His-164, His-203, and His-205 each contribute to the Fe cation site. AMP contacts are provided by residues His-24, Asp-64, and 94 to 95 (NH). An AMP-binding site is contributed by His-205.

This sequence belongs to the cyclic nucleotide phosphodiesterase class-III family. It depends on Fe(2+) as a cofactor.

The catalysed reaction is 3',5'-cyclic AMP + H2O = AMP + H(+). Its function is as follows. Hydrolyzes cAMP to 5'-AMP. Plays an important regulatory role in modulating the intracellular concentration of cAMP, thereby influencing cAMP-dependent processes. This is 3',5'-cyclic adenosine monophosphate phosphodiesterase CpdA from Escherichia coli O157:H7.